The following is a 148-amino-acid chain: MVKARKEPVNAVQVFGRKKTATAVAYCKRGKGLLRVNGRPLDQIEPKVLQYKLQEPLLLLGKEKFAGVDIRIRVSGGGHVAQIYAIRQAISKALVSFYQKYVDEASRKELKDILTQYDRTLLVADPRRCEPKKFGGPGARARYQKSYR.

The protein belongs to the universal ribosomal protein uS9 family.

The chain is Small ribosomal subunit protein uS9 (RpS16) from Aedes aegypti (Yellowfever mosquito).